We begin with the raw amino-acid sequence, 236 residues long: C-&gt;U-editing enzyme APOBEC-1 (236 aa).

The region spanning 10 to 134 (GDPTLRRRIE…QRNRQGLRDL (125 aa)) is the CMP/dCMP-type deaminase domain. Residue His61 participates in Zn(2+) binding. Residue Glu63 is the Proton donor of the active site. Positions 93 and 96 each coordinate Zn(2+).

This sequence belongs to the cytidine and deoxycytidylate deaminase family. Homodimer. Interacts with A1CF; form an mRNA editing complex. Interacts with RBM47; form an mRNA editing complex. Found in a complex with CELF2/CUGBP2 and A1CF. Interacts with HNRPAB. Interacts with SYNCRIP. It depends on Zn(2+) as a cofactor.

The protein resides in the cytoplasm. The protein localises to the nucleus. It catalyses the reaction a cytidine in mRNA + H2O + H(+) = a uridine in mRNA + NH4(+). The catalysed reaction is cytidine(6666) in apoB mRNA + H2O + H(+) = uridine(6666) in apoB mRNA + NH4(+). In terms of biological role, cytidine deaminase catalyzing the cytidine to uridine postranscriptional editing of a variety of mRNAs. Form complexes with cofactors that confer differential editing activity and selectivity. Responsible for the postranscriptional editing of a CAA codon for Gln to a UAA codon for stop in the apolipoprotein B mRNA. Also involved in CGA (Arg) to UGA (Stop) editing in the NF1 mRNA. May also play a role in the epigenetic regulation of gene expression by participating in DNA demethylation. The sequence is that of C-&gt;U-editing enzyme APOBEC-1 from Pongo pygmaeus (Bornean orangutan).